The chain runs to 150 residues: Large ribosomal subunit protein bL9 (150 aa).

Belongs to the bacterial ribosomal protein bL9 family.

In terms of biological role, binds to the 23S rRNA. The chain is Large ribosomal subunit protein bL9 from Vibrio atlanticus (strain LGP32) (Vibrio splendidus (strain Mel32)).